Reading from the N-terminus, the 312-residue chain is Methionyl-tRNA formyltransferase (312 aa).

Residue 107–110 (SLLP) participates in (6S)-5,6,7,8-tetrahydrofolate binding.

It belongs to the Fmt family.

The enzyme catalyses L-methionyl-tRNA(fMet) + (6R)-10-formyltetrahydrofolate = N-formyl-L-methionyl-tRNA(fMet) + (6S)-5,6,7,8-tetrahydrofolate + H(+). Attaches a formyl group to the free amino group of methionyl-tRNA(fMet). The formyl group appears to play a dual role in the initiator identity of N-formylmethionyl-tRNA by promoting its recognition by IF2 and preventing the misappropriation of this tRNA by the elongation apparatus. In Endomicrobium trichonymphae, this protein is Methionyl-tRNA formyltransferase.